A 241-amino-acid polypeptide reads, in one-letter code: Triosephosphate isomerase (241 aa).

9 to 11 is a substrate binding site; that stretch reads NWK. Catalysis depends on H96, which acts as the Electrophile. E165 (proton acceptor) is an active-site residue. Residues G171, S204, and 225–226 contribute to the substrate site; that span reads GG.

This sequence belongs to the triosephosphate isomerase family. Homodimer.

It localises to the cytoplasm. The enzyme catalyses D-glyceraldehyde 3-phosphate = dihydroxyacetone phosphate. Its pathway is carbohydrate biosynthesis; gluconeogenesis. It functions in the pathway carbohydrate degradation; glycolysis; D-glyceraldehyde 3-phosphate from glycerone phosphate: step 1/1. In terms of biological role, involved in the gluconeogenesis. Catalyzes stereospecifically the conversion of dihydroxyacetone phosphate (DHAP) to D-glyceraldehyde-3-phosphate (G3P). This is Triosephosphate isomerase from Prochlorococcus marinus (strain MIT 9301).